The following is a 64-amino-acid chain: uncharacterized protein (64 aa).

The chain crosses the membrane as a helical span at residues 41–61; sequence VFLALKVLGIMVLFYLLDAII.

It is found in the membrane. This is an uncharacterized protein from Acheta domesticus (House cricket).